The sequence spans 1899 residues: Protocadherin-15 (1899 aa).

The first 26 residues, 1-26 (MLQQFCLWKWLAVGIAVATILASSLA), serve as a signal peptide directing secretion. At 27–1376 (QNDEDCKLAR…AQAVGYTEGA (1350 aa)) the chain is on the extracellular side. Cysteines 32 and 120 form a disulfide. 11 Cadherin domains span residues 38 to 147 (GPPA…SPQF), 148 to 265 (QQQR…GPMF), 278 to 395 (RPLT…KPYF), 396 to 509 (TKST…SPTF), 510 to 616 (SNIS…PPRF), 617 to 717 (PQLM…GPVF), 719 to 819 (MFLP…SPVF), 820 to 926 (TNAS…SPVF), 927 to 1035 (SKTL…IPRF), 1037 to 1144 (QDEY…APVF), and 1145 to 1259 (TKKM…PPTL). The chain crosses the membrane as a helical span at residues 1377-1397 (LLALAVIIILCCMPAILIVMV). Residues 1398–1899 (SYRQRQAECA…KRFPSQSTAL (502 aa)) are Cytoplasmic-facing. Disordered stretches follow at residues 1668 to 1687 (SPCL…VVEP), 1700 to 1721 (HDYP…SFRI), and 1734 to 1820 (TKGE…RREL). Composition is skewed to pro residues over residues 1706–1717 (LSPPPTRKPTPP) and 1743–1773 (PDPP…PPTL). The segment covering 1774 to 1791 (PLASVPSSSSLPSTQHLS) has biased composition (low complexity). The segment covering 1804–1814 (AVPPPAAVPEP) has biased composition (pro residues).

In terms of tissue distribution, in the utricle, localizes to the distal region of the kinocilium and near the tips of the stereocilia.

It localises to the cell membrane. In terms of biological role, calcium-dependent cell-adhesion protein. Required for inner ear neuroepithelial cell elaboration and cochlear function. Probably involved in the maintenance of normal retinal function. This is Protocadherin-15 (Pcdh15) from Gallus gallus (Chicken).